We begin with the raw amino-acid sequence, 465 residues long: Glutamate--tRNA ligase 1 (465 aa).

A 'HIGH' region motif is present at residues 8 to 18 (PSPTGLMHLGN). The short motif at 249–253 (PLSKR) is the 'KMSKS' region element. Lys-252 provides a ligand contact to ATP.

It belongs to the class-I aminoacyl-tRNA synthetase family. Glutamate--tRNA ligase type 1 subfamily. In terms of assembly, monomer.

It localises to the cytoplasm. It carries out the reaction tRNA(Glu) + L-glutamate + ATP = L-glutamyl-tRNA(Glu) + AMP + diphosphate. In terms of biological role, catalyzes the attachment of glutamate to tRNA(Glu) in a two-step reaction: glutamate is first activated by ATP to form Glu-AMP and then transferred to the acceptor end of tRNA(Glu). This Coxiella burnetii (strain CbuG_Q212) (Coxiella burnetii (strain Q212)) protein is Glutamate--tRNA ligase 1.